We begin with the raw amino-acid sequence, 164 residues long: Nucleotide-binding protein Mfla_1706 (164 aa).

It belongs to the YajQ family.

Functionally, nucleotide-binding protein. The protein is Nucleotide-binding protein Mfla_1706 of Methylobacillus flagellatus (strain ATCC 51484 / DSM 6875 / VKM B-1610 / KT).